We begin with the raw amino-acid sequence, 280 residues long: ATP synthase gamma chain (280 aa).

This sequence belongs to the ATPase gamma chain family. In terms of assembly, F-type ATPases have 2 components, CF(1) - the catalytic core - and CF(0) - the membrane proton channel. CF(1) has five subunits: alpha(3), beta(3), gamma(1), delta(1), epsilon(1). CF(0) has three main subunits: a, b and c.

The protein localises to the cell membrane. Functionally, produces ATP from ADP in the presence of a proton gradient across the membrane. The gamma chain is believed to be important in regulating ATPase activity and the flow of protons through the CF(0) complex. The polypeptide is ATP synthase gamma chain (Mycoplasma mycoides subsp. mycoides SC (strain CCUG 32753 / NCTC 10114 / PG1)).